The primary structure comprises 91 residues: Acylphosphatase (91 aa).

The Acylphosphatase-like domain occupies 4 to 91 (RAIVTIKGLV…GEFDDFDVRY (88 aa)). Active-site residues include R19 and N37.

This sequence belongs to the acylphosphatase family.

The catalysed reaction is an acyl phosphate + H2O = a carboxylate + phosphate + H(+). This Geobacter sulfurreducens (strain ATCC 51573 / DSM 12127 / PCA) protein is Acylphosphatase (acyP).